A 448-amino-acid polypeptide reads, in one-letter code: Phosphoglucosamine mutase (448 aa).

S100 serves as the catalytic Phosphoserine intermediate. Positions 100, 240, 242, and 244 each coordinate Mg(2+). S100 bears the Phosphoserine mark.

It belongs to the phosphohexose mutase family. Mg(2+) serves as cofactor. Post-translationally, activated by phosphorylation.

The catalysed reaction is alpha-D-glucosamine 1-phosphate = D-glucosamine 6-phosphate. Catalyzes the conversion of glucosamine-6-phosphate to glucosamine-1-phosphate. In Bacillus cytotoxicus (strain DSM 22905 / CIP 110041 / 391-98 / NVH 391-98), this protein is Phosphoglucosamine mutase.